The sequence spans 363 residues: Putative replication factor C small subunit L510 (363 aa).

47-54 (GPPGTGKT) serves as a coordination point for ATP.

It belongs to the activator 1 small subunits family. RfcS subfamily.

Its function is as follows. Part of the RFC clamp loader complex which loads the PCNA sliding clamp onto DNA. The polypeptide is Putative replication factor C small subunit L510 (Acanthamoeba polyphaga mimivirus (APMV)).